We begin with the raw amino-acid sequence, 320 residues long: o-succinylbenzoate synthase (320 aa).

The active-site Proton donor is lysine 133. The Mg(2+) site is built by aspartate 161, glutamate 190, and aspartate 213. Lysine 235 acts as the Proton acceptor in catalysis.

Belongs to the mandelate racemase/muconate lactonizing enzyme family. MenC type 1 subfamily. A divalent metal cation is required as a cofactor.

The catalysed reaction is (1R,6R)-6-hydroxy-2-succinyl-cyclohexa-2,4-diene-1-carboxylate = 2-succinylbenzoate + H2O. Its pathway is quinol/quinone metabolism; 1,4-dihydroxy-2-naphthoate biosynthesis; 1,4-dihydroxy-2-naphthoate from chorismate: step 4/7. It participates in quinol/quinone metabolism; menaquinone biosynthesis. In terms of biological role, converts 2-succinyl-6-hydroxy-2,4-cyclohexadiene-1-carboxylate (SHCHC) to 2-succinylbenzoate (OSB). The sequence is that of o-succinylbenzoate synthase from Shigella flexneri.